The primary structure comprises 441 residues: pH-response regulator protein palC (441 aa).

The BRO1 domain maps to 3–352 (ISYTGQLPTT…GAAYAAILQL (350 aa)). Disordered stretches follow at residues 278-304 (RKDD…TSSG) and 414-441 (KWTP…GSYY).

Belongs to the palC family.

Required for the proteolytic cleavage of the transcription factor RIM101 in response to alkaline ambient pH. This Yarrowia lipolytica (strain CLIB 122 / E 150) (Yeast) protein is pH-response regulator protein palC.